A 426-amino-acid polypeptide reads, in one-letter code: L-ascorbate peroxidase T, chloroplastic (426 aa).

The active-site Proton acceptor is H112. A heme b-binding site is contributed by H241. T242 serves as a coordination point for K(+). The interval 245–269 (RARPDRSGWGKPETKYTKTGPGEAG) is disordered. The span at 246-260 (ARPDRSGWGKPETKY) shows a compositional bias: basic and acidic residues. The K(+) site is built by T274 and D281. A helical membrane pass occupies residues 397–417 (YFLNIIIAIGVLVLLSTLFGG).

The protein belongs to the peroxidase family. Ascorbate peroxidase subfamily. Heme b serves as cofactor.

The protein localises to the plastid. The protein resides in the chloroplast thylakoid membrane. It carries out the reaction L-ascorbate + H2O2 = L-dehydroascorbate + 2 H2O. Its function is as follows. Plays a key role in hydrogen peroxide removal. The chain is L-ascorbate peroxidase T, chloroplastic (APXT) from Arabidopsis thaliana (Mouse-ear cress).